The chain runs to 488 residues: MGKFLATLILFFQFCPLILGDYSPSCCTLTIGVSSYHSKPCNPAQPVCSWTLDLLALSADQALQPPCPNLVSYSSYHATYSLYLFPHWIKKPNRNGGGYYSASYSDPCSLKCPYLGCQSWTCPYTGAVSSPYWKFQQDVNFTQEVSRLNINLHFSKCGFPFSLLVDAPGYDPIWFLNTEPSQLPPTAPPLLPHSNLDHILEPSIPWKSKLLTLVQLTLQSTNYTCIVCIDRASLSTWHVLYSPNVSVPSSSSTPLLYPSLALPAPHLTLPFNWTHCFDPQIQAIVSSPCHNSLILPPFSLSPVPTLGSRSRRAVPVAVWLVSALAMGAGVAGGITGSMSLASGKSLLHEVDKDISQLTQAIVKNHKNLLKIAQYAAQNRRGLDLLFWEQGGLCKALQEQCCFLNITNSHVSILQERPPLENRVLTGWGLNWDLGLSQWAREALQTGITLVALLLLVILAGPCILRQLRHLPSRVRYPHYSLINPESSL.

The signal sequence occupies residues 1 to 20; the sequence is MGKFLATLILFFQFCPLILG. Topologically, residues 21 to 442 are extracellular; it reads DYSPSCCTLT…LGLSQWAREA (422 aa). Asn-140 and Asn-222 each carry an N-linked (GlcNAc...) asparagine; by host glycan. The CXXC signature appears at 225–228; it reads CIVC. Disulfide bonds link Cys-225–Cys-228, Cys-225–Cys-401, and Cys-393–Cys-400. N-linked (GlcNAc...) asparagine; by host glycans are attached at residues Asn-244 and Asn-272. The fusion peptide stretch occupies residues 313-333; it reads AVPVAVWLVSALAMGAGVAGG. The interval 327 to 339 is gly-rich; the sequence is GAGVAGGITGSMS. Coiled-coil stretches lie at residues 340-385 and 397-429; these read LASG…LDLL and QEQC…GWGL. An immunosuppression region spans residues 376-392; that stretch reads AQNRRGLDLLFWEQGGL. Positions 393–401 match the CX6CC motif; that stretch reads CKALQEQCC. Asn-404 is a glycosylation site (N-linked (GlcNAc...) asparagine; by host). The helical transmembrane segment at 443-463 threads the bilayer; it reads LQTGITLVALLLLVILAGPCI. Cys-462 is lipidated: S-palmitoyl cysteine; by host. The Cytoplasmic portion of the chain corresponds to 464–488; the sequence is LRQLRHLPSRVRYPHYSLINPESSL.

In terms of assembly, the mature envelope protein (Env) consists of a trimer of SU-TM heterodimers attached by a labile interchain disulfide bond. Post-translationally, specific enzymatic cleavages in vivo yield mature proteins. Envelope glycoproteins are synthesized as an inactive precursor that is N-glycosylated and processed likely by host cell furin or by a furin-like protease in the Golgi to yield the mature SU and TM proteins. The cleavage site between SU and TM requires the minimal sequence [KR]-X-[KR]-R. The CXXC motif is highly conserved across a broad range of retroviral envelope proteins. It is thought to participate in the formation of a labile disulfide bond possibly with the CX6CC motif present in the transmembrane protein. Isomerization of the intersubunit disulfide bond to an SU intrachain disulfide bond is thought to occur upon receptor recognition in order to allow membrane fusion. In terms of processing, the transmembrane protein is palmitoylated.

It localises to the virion membrane. The protein resides in the host cell membrane. Functionally, the surface protein (SU) attaches the virus to the host cell by binding to its receptor. This interaction triggers the refolding of the transmembrane protein (TM) and is thought to activate its fusogenic potential by unmasking its fusion peptide. Fusion occurs at the host cell plasma membrane. Its function is as follows. The transmembrane protein (TM) acts as a class I viral fusion protein. Under the current model, the protein has at least 3 conformational states: pre-fusion native state, pre-hairpin intermediate state, and post-fusion hairpin state. During viral and target cell membrane fusion, the coiled coil regions (heptad repeats) assume a trimer-of-hairpins structure, positioning the fusion peptide in close proximity to the C-terminal region of the ectodomain. The formation of this structure appears to drive apposition and subsequent fusion of viral and target cell membranes. Membranes fusion leads to delivery of the nucleocapsid into the cytoplasm. The sequence is that of Envelope glycoprotein gp62 (env) from Human T-cell leukemia virus 1 (strain Japan MT-2 subtype A) (HTLV-1).